A 416-amino-acid chain; its full sequence is 4-hydroxy-3-methylbut-2-en-1-yl diphosphate synthase (flavodoxin) (416 aa).

The [4Fe-4S] cluster site is built by Cys304, Cys307, Cys350, and Glu357.

This sequence belongs to the IspG family. [4Fe-4S] cluster serves as cofactor.

It carries out the reaction (2E)-4-hydroxy-3-methylbut-2-enyl diphosphate + oxidized [flavodoxin] + H2O + 2 H(+) = 2-C-methyl-D-erythritol 2,4-cyclic diphosphate + reduced [flavodoxin]. It functions in the pathway isoprenoid biosynthesis; isopentenyl diphosphate biosynthesis via DXP pathway; isopentenyl diphosphate from 1-deoxy-D-xylulose 5-phosphate: step 5/6. Functionally, converts 2C-methyl-D-erythritol 2,4-cyclodiphosphate (ME-2,4cPP) into 1-hydroxy-2-methyl-2-(E)-butenyl 4-diphosphate. This Allorhizobium ampelinum (strain ATCC BAA-846 / DSM 112012 / S4) (Agrobacterium vitis (strain S4)) protein is 4-hydroxy-3-methylbut-2-en-1-yl diphosphate synthase (flavodoxin).